The sequence spans 262 residues: Aquaporin TIP3-1 (262 aa).

2 helical membrane-spanning segments follow: residues 27 to 47 and 61 to 81; these read AAISEFIATAIFVFAAEGSVL and GLVAVALAHALALAVAVAVAV. An NPA 1 motif is present at residues 89–91; the sequence is NPA. 3 consecutive transmembrane segments (helical) span residues 104–124, 148–168, and 175–195; these read LVRAVLYWVAQLLGAVAATLL, AVLLEAVMTFGLMYAYYATVI, and VGTIAPLAVGFLLGANVLAGG. Residues 203–205 carry the NPA 2 motif; it reads NPA. The chain crosses the membrane as a helical span at residues 223-243; the sequence is YWLGPFLGAGLAGLVYEYLVI.

It belongs to the MIP/aquaporin (TC 1.A.8) family. TIP (TC 1.A.8.10) subfamily.

Its subcellular location is the vacuole membrane. Its function is as follows. Aquaporins facilitate the transport of water and small neutral solutes across cell membranes. The sequence is that of Aquaporin TIP3-1 (TIP3-1) from Zea mays (Maize).